Reading from the N-terminus, the 1056-residue chain is RNA cytidine acetyltransferase (1056 aa).

286–295 (GRGKSAALGI) is an ATP binding site. Over residues 433 to 446 (QNNTSGRESTQTAV) the composition is skewed to polar residues. The interval 433-463 (QNNTSGRESTQTAVVSRDNKEKDSHLHSQSR) is disordered. Basic and acidic residues predominate over residues 449 to 463 (RDNKEKDSHLHSQSR). Arginine 475 contacts ATP. Residues 566 to 706 (VLLPPIDPKD…VKLRDAKTLP (141 aa)) form the N-acetyltransferase domain. Residues 638-640 (IAT), 645-651 (ASMGYGS), and asparagine 739 each bind acetyl-CoA. Residues serine 1001, serine 1007, and serine 1010 each carry the phosphoserine modification.

The protein belongs to the RNA cytidine acetyltransferase family. NAT10 subfamily. As to quaternary structure, interacts with TAN1. Associates with 90S pre-ribosomal particles.

The protein resides in the nucleus. It is found in the nucleolus. It carries out the reaction a cytidine in 18S rRNA + acetyl-CoA + ATP + H2O = an N(4)-acetylcytidine in 18S rRNA + ADP + phosphate + CoA + H(+). The catalysed reaction is a cytidine in tRNA + acetyl-CoA + ATP + H2O = an N(4)-acetylcytidine in tRNA + ADP + phosphate + CoA + H(+). In terms of biological role, RNA cytidine acetyltransferase with specificity toward both 18S rRNA and tRNAs. Catalyzes the formation of N(4)-acetylcytidine (ac4C) at positions 1280 and 1773 in 18S rRNA. Required for early nucleolar cleavages of precursor rRNA at sites A0, A1 and A2 during 18S rRNA synthesis. Catalyzes the formation of ac4C at position 12 in serine and leucine tRNAs. Requires the tRNA-binding adapter protein TAN1 for full tRNA acetyltransferase activity but not for 18S rRNA acetylation. The protein is RNA cytidine acetyltransferase of Saccharomyces cerevisiae (strain ATCC 204508 / S288c) (Baker's yeast).